A 225-amino-acid polypeptide reads, in one-letter code: Transmembrane protein 225 (225 aa).

Residues 1 to 8 (MVHVSNRS) are Cytoplasmic-facing. Residues 9–29 (IQGMNILFSSWAVVLMVMGIT) form a helical membrane-spanning segment. Residues 30–72 (LDKWVELISEDERAKMNHSPWMMCCPALWPEDDLKVVRIMMTS) are Extracellular-facing. The helical transmembrane segment at 73 to 93 (SLGLSFLLNLILGMKFTYLIP) threads the bilayer. The Cytoplasmic segment spans residues 94–99 (QNKYIQ). A helical transmembrane segment spans residues 100–120 (LFTTILSFFSGISLLWALILY). The Extracellular portion of the chain corresponds to 121-136 (HNKLKQGQSMHFSSYR). A helical transmembrane segment spans residues 137-157 (ITWIMYTAYLNVFFLSVCGVL). Over 158–225 (SLLECKLSTS…VQTRHVTWAL (68 aa)) the chain is Cytoplasmic. An RVxF motif is present at residues 219–223 (RHVTW).

In terms of assembly, interacts (via RVxF motif) with PPP1CC.

The protein resides in the cytoplasmic vesicle. It localises to the secretory vesicle. Its subcellular location is the acrosome membrane. Functionally, probably inhibits protein phosphatase 1 (PP1) in sperm via binding to catalytic subunit PPP1CC. This Homo sapiens (Human) protein is Transmembrane protein 225 (TMEM225).